The primary structure comprises 435 residues: Enolase (435 aa).

Glutamine 163 serves as a coordination point for (2R)-2-phosphoglycerate. Residue glutamate 205 is the Proton donor of the active site. 3 residues coordinate Mg(2+): aspartate 243, glutamate 292, and aspartate 319. (2R)-2-phosphoglycerate contacts are provided by lysine 344, arginine 373, serine 374, and lysine 395. The active-site Proton acceptor is lysine 344.

This sequence belongs to the enolase family. Mg(2+) serves as cofactor.

Its subcellular location is the cytoplasm. It localises to the secreted. The protein localises to the cell surface. It catalyses the reaction (2R)-2-phosphoglycerate = phosphoenolpyruvate + H2O. The protein operates within carbohydrate degradation; glycolysis; pyruvate from D-glyceraldehyde 3-phosphate: step 4/5. Functionally, catalyzes the reversible conversion of 2-phosphoglycerate (2-PG) into phosphoenolpyruvate (PEP). It is essential for the degradation of carbohydrates via glycolysis. This Streptococcus equi subsp. zooepidemicus (strain MGCS10565) protein is Enolase.